We begin with the raw amino-acid sequence, 336 residues long: UDP-3-O-acylglucosamine N-acyltransferase (336 aa).

Histidine 233 acts as the Proton acceptor in catalysis.

It belongs to the transferase hexapeptide repeat family. LpxD subfamily. Homotrimer.

The enzyme catalyses a UDP-3-O-[(3R)-3-hydroxyacyl]-alpha-D-glucosamine + a (3R)-hydroxyacyl-[ACP] = a UDP-2-N,3-O-bis[(3R)-3-hydroxyacyl]-alpha-D-glucosamine + holo-[ACP] + H(+). The protein operates within bacterial outer membrane biogenesis; LPS lipid A biosynthesis. Catalyzes the N-acylation of UDP-3-O-acylglucosamine using 3-hydroxyacyl-ACP as the acyl donor. Is involved in the biosynthesis of lipid A, a phosphorylated glycolipid that anchors the lipopolysaccharide to the outer membrane of the cell. This is UDP-3-O-acylglucosamine N-acyltransferase from Helicobacter pylori (strain ATCC 700392 / 26695) (Campylobacter pylori).